The following is a 101-amino-acid chain: MAKKSMVEREKKRERLVQKYAAKRAALNEIIHDQSLPMEERFKASLKLAELPRNSSATRLHNRCQLTGRPHAYYRKLKLSRIMLRELGSFGQIPGMVKSSW.

The protein belongs to the universal ribosomal protein uS14 family. As to quaternary structure, part of the 30S ribosomal subunit. Contacts proteins S3 and S10.

Its function is as follows. Binds 16S rRNA, required for the assembly of 30S particles and may also be responsible for determining the conformation of the 16S rRNA at the A site. The chain is Small ribosomal subunit protein uS14 from Paracoccus denitrificans (strain Pd 1222).